The following is a 213-amino-acid chain: Peroxynitrite isomerase 2 (213 aa).

The GXWXGXG signature appears at 58–64 (GVWRGEG). Heme b contacts are provided by lysine 176 and histidine 203.

The protein belongs to the nitrobindin family. Homodimer. Heme b is required as a cofactor.

It carries out the reaction peroxynitrite = nitrate. It participates in nitrogen metabolism. Heme-binding protein able to scavenge peroxynitrite and to protect free L-tyrosine against peroxynitrite-mediated nitration, by acting as a peroxynitrite isomerase that converts peroxynitrite to nitrate. Therefore, this protein likely plays a role in peroxynitrite sensing and in the detoxification of reactive nitrogen and oxygen species (RNS and ROS, respectively). Is able to bind nitric oxide (NO) in vitro, but may act as a sensor of peroxynitrite levels in vivo. This Rhodococcus jostii (strain RHA1) protein is Peroxynitrite isomerase 2.